The sequence spans 863 residues: Alanine--tRNA ligase (863 aa).

Residues histidine 552, histidine 556, cysteine 654, and histidine 658 each coordinate Zn(2+).

The protein belongs to the class-II aminoacyl-tRNA synthetase family. Zn(2+) is required as a cofactor.

The protein localises to the cytoplasm. The enzyme catalyses tRNA(Ala) + L-alanine + ATP = L-alanyl-tRNA(Ala) + AMP + diphosphate. In terms of biological role, catalyzes the attachment of alanine to tRNA(Ala) in a two-step reaction: alanine is first activated by ATP to form Ala-AMP and then transferred to the acceptor end of tRNA(Ala). Also edits incorrectly charged Ser-tRNA(Ala) and Gly-tRNA(Ala) via its editing domain. In Nitrosomonas europaea (strain ATCC 19718 / CIP 103999 / KCTC 2705 / NBRC 14298), this protein is Alanine--tRNA ligase.